Consider the following 524-residue polypeptide: 2,3-bisphosphoglycerate-independent phosphoglycerate mutase (524 aa).

The Mn(2+) site is built by Asp13 and Ser63. Ser63 serves as the catalytic Phosphoserine intermediate. Substrate is bound by residues His124, 154-155 (RD), Arg186, Arg192, 262-265 (RADR), and Lys337. Asp404, His408, Asp445, His446, and His464 together coordinate Mn(2+).

The protein belongs to the BPG-independent phosphoglycerate mutase family. Monomer. Requires Mn(2+) as cofactor.

It carries out the reaction (2R)-2-phosphoglycerate = (2R)-3-phosphoglycerate. The protein operates within carbohydrate degradation; glycolysis; pyruvate from D-glyceraldehyde 3-phosphate: step 3/5. Functionally, catalyzes the interconversion of 2-phosphoglycerate and 3-phosphoglycerate. The sequence is that of 2,3-bisphosphoglycerate-independent phosphoglycerate mutase from Thermomicrobium roseum (strain ATCC 27502 / DSM 5159 / P-2).